Consider the following 472-residue polypeptide: Argininosuccinate lyase (472 aa).

The protein belongs to the lyase 1 family. Argininosuccinate lyase subfamily.

Its subcellular location is the cytoplasm. It catalyses the reaction 2-(N(omega)-L-arginino)succinate = fumarate + L-arginine. The protein operates within amino-acid biosynthesis; L-arginine biosynthesis; L-arginine from L-ornithine and carbamoyl phosphate: step 3/3. This Polynucleobacter necessarius subsp. necessarius (strain STIR1) protein is Argininosuccinate lyase.